A 739-amino-acid polypeptide reads, in one-letter code: MDSRPQKVWMTPSLTESDMDYHKILTAGLSVQQGIVRQRVIPVYQVNNLEEICQLIIQAFEAGVDFQESADSFLLMLCLHHAYQGDYKLFLESGAVKYLEGHGFRFEVKKRDGVKRLEELLPAVSSGKNIKRTLAAMPEEETTEANAGQFLSFASLFLPKLVVGEKACLEKVQRQIQVHAEQGLIQYPTAWQSVGHMMVIFRLMRTNFLIKFLLIHQGMHMVAGHDANDAVISNSVAQARFSGLLIVKTVLDHILQKTERGVRLHPLARTAKVKNEVNSFKAALSSLAKHGEYAPFARLLNLSGVNNLEHGLFPQLSAIALGVATAHGSTLAGVNVGEQYQQLREAATEAEKQLQQYAESRELDHLGLDDQEKKILMNFHQKKNEISFQQTNAMVTLRKERLAKLTEAITAASLPKTSGHYDDDDDIPFPGPINDDDNPGHQDDDPTDSQDTTIPDVVVDPDDGSYGEYQSYSENGMNAPDDLVLFDLDEDDEDTKPVPNRSTKGGQQKNSQKGQHTEGRQTQSRPTQNVPGPHRTIHHASAPLTDNDRRNEPSGSTSPRMLTPINEEADPLDDADDETSSLPPLESDDEEQDRDGTSNRTPTVAPPAPVYRDHSEKRELPQDEQQDQDHTQEARNQDSDNTQPEHSFEEMYRHILRSQGPFDAVLYYHMMKDEPVVFSTSDGKEYTYPDSLEEEYPPWLTEKEAMNEENRFVTLDGQQFYWPVMNHKNKFMAILQHHQ.

The stretch at V334–L363 forms a coiled coil. Positions P415–H646 are disordered. 2 stretches are compositionally biased toward low complexity: residues S449–V458 and K504–G514. Positions R520–V530 are enriched in polar residues. Positions E567 to T579 are enriched in acidic residues. Positions Y611–D638 are enriched in basic and acidic residues.

The protein belongs to the filoviruses nucleoprotein family. In terms of assembly, homooligomer. Homomultimerizes to form the nucleocapsid. Binds to viral genomic RNA. Interacts with VP35 and VP30 to form the nucleocapsid. Interacts with host PPP2R5C; this interaction leads to VP30 dephosphorylation and viral transcription. Interacts with VP24; this interaction facilitates nucleocapsid assembly and genome packaging. Interacts with matrix protein VP40; this interaction allows recruitment of the nucleocapsid into progeny virions. Interacts with host STAU1. Interacts with host NXF1 (via RNA-binding domain); this interaction recruits NXF1 to the inclusion bodies were viral replication takes place, probably to export viral mRNA-NXF1 complexes from these sites. Interacts with host CCDC92; this interaction sequesters NP in the host cytoplasm. Interacts with host TRIM14. Phosphorylated and O-glycosylated by host. Acetylated by host EP300 in vitro.

The protein localises to the virion. It is found in the host cytoplasm. Its function is as follows. Oligomerizes into helical capsid to encapsidate the viral genome, protecting it from nucleases and the cellular innate immune response. VP35 binds to and stabilizes monomeric NP, keeping it soluble. Upon virus replication, NP is recruited to bind cooperatively viral genomic RNA and VP35 is released. The encapsidated genomic RNA is termed the nucleocapsid and serves as template for transcription and replication. The nucleocapsid is helical with a pitch of 10.81 NP per turn and a diameter of about 22nm. Each NP binds to six nucleotides of viral genomic RNA, three being exposed to the solvant and three hidden into the nucleocapsid. Also recruits host PPP2R5C phosphatase to dephosphorylate VP30 and thereby promote viral transcription. Upon virion assembly and budding, NP binds to VP24 and possibly host STAU1. The chain is Nucleoprotein (NP) from Epomops franqueti (Franquet's epauletted fruit bat).